The primary structure comprises 105 residues: Large ribosomal subunit protein bL21 (105 aa).

This sequence belongs to the bacterial ribosomal protein bL21 family. As to quaternary structure, part of the 50S ribosomal subunit. Contacts protein L20.

Functionally, this protein binds to 23S rRNA in the presence of protein L20. The protein is Large ribosomal subunit protein bL21 of Parabacteroides distasonis (strain ATCC 8503 / DSM 20701 / CIP 104284 / JCM 5825 / NCTC 11152).